Consider the following 89-residue polypeptide: Arminin 375 (89 aa).

The signal sequence occupies residues 1-18 (MKAVFAILFLAFIALTYA). The propeptide occupies 19 to 57 (KSYDEVKEEIKNEVEREIFEDLEEESDELDNYVEESNDA). Alanine 86 carries the alanine amide modification.

This sequence belongs to the arminin family. As to expression, expressed in entodermal epithelium along the body column.

The protein localises to the secreted. The protein resides in the target cell membrane. In terms of biological role, antimicrobial peptide with a broad-spectrum antimicrobial activity. Keeps its antibacterial activity under a wide range of salt concentrations that mimic physiological conditions of human blood, which is surprising, since Hydra is an obligate freshwater animal with nearly no salt tolerance. Does not affect red blood cells. This is Arminin 375 from Hydra oligactis (Brown hydra).